The chain runs to 376 residues: Chaperone protein DnaJ (376 aa).

One can recognise a J domain in the interval 5–70 (DYYEILGVSK…QKRAAYDQYG (66 aa)). Residues 131-209 (GVTKEIRIPT…CHGHGRVERS (79 aa)) form a CR-type zinc finger. The Zn(2+) site is built by Cys-144, Cys-147, Cys-161, Cys-164, Cys-183, Cys-186, Cys-197, and Cys-200. CXXCXGXG motif repeat units follow at residues 144–151 (CDVCHGSG), 161–168 (CPTCHGSG), 183–190 (CPHCQGRG), and 197–204 (CNKCHGHG).

It belongs to the DnaJ family. In terms of assembly, homodimer. Requires Zn(2+) as cofactor.

The protein resides in the cytoplasm. Participates actively in the response to hyperosmotic and heat shock by preventing the aggregation of stress-denatured proteins and by disaggregating proteins, also in an autonomous, DnaK-independent fashion. Unfolded proteins bind initially to DnaJ; upon interaction with the DnaJ-bound protein, DnaK hydrolyzes its bound ATP, resulting in the formation of a stable complex. GrpE releases ADP from DnaK; ATP binding to DnaK triggers the release of the substrate protein, thus completing the reaction cycle. Several rounds of ATP-dependent interactions between DnaJ, DnaK and GrpE are required for fully efficient folding. Also involved, together with DnaK and GrpE, in the DNA replication of plasmids through activation of initiation proteins. This chain is Chaperone protein DnaJ, found in Shigella dysenteriae serotype 1 (strain Sd197).